The following is a 422-amino-acid chain: Dihydroorotase (422 aa).

Zn(2+) contacts are provided by His-59 and His-61. Residues 61–63 (HFR) and Asn-93 contribute to the substrate site. Residues Asp-150, His-177, and His-230 each coordinate Zn(2+). A substrate-binding site is contributed by Asn-276. Asp-303 is a Zn(2+) binding site. The active site involves Asp-303. His-307 is a binding site for substrate.

The protein belongs to the metallo-dependent hydrolases superfamily. DHOase family. Class I DHOase subfamily. Requires Zn(2+) as cofactor.

It carries out the reaction (S)-dihydroorotate + H2O = N-carbamoyl-L-aspartate + H(+). The protein operates within pyrimidine metabolism; UMP biosynthesis via de novo pathway; (S)-dihydroorotate from bicarbonate: step 3/3. Its function is as follows. Catalyzes the reversible cyclization of carbamoyl aspartate to dihydroorotate. This chain is Dihydroorotase, found in Streptococcus thermophilus (strain CNRZ 1066).